Consider the following 381-residue polypeptide: DNA replication and repair protein RecF (381 aa).

30 to 37 contributes to the ATP binding site; the sequence is GENAQGKT.

The protein belongs to the RecF family.

It is found in the cytoplasm. The RecF protein is involved in DNA metabolism; it is required for DNA replication and normal SOS inducibility. RecF binds preferentially to single-stranded, linear DNA. It also seems to bind ATP. The sequence is that of DNA replication and repair protein RecF from Lactobacillus delbrueckii subsp. bulgaricus (strain ATCC BAA-365 / Lb-18).